The following is a 413-amino-acid chain: uncharacterized protein (413 aa).

Positions 1–20 are cleaved as a signal peptide; it reads MRVIIVIMMVVFVVVGTSSG.

This is an uncharacterized protein from Archaeoglobus fulgidus (strain ATCC 49558 / DSM 4304 / JCM 9628 / NBRC 100126 / VC-16).